A 477-amino-acid polypeptide reads, in one-letter code: Aspartyl/glutamyl-tRNA(Asn/Gln) amidotransferase subunit B (477 aa).

The protein belongs to the GatB/GatE family. GatB subfamily. As to quaternary structure, heterotrimer of A, B and C subunits.

The catalysed reaction is L-glutamyl-tRNA(Gln) + L-glutamine + ATP + H2O = L-glutaminyl-tRNA(Gln) + L-glutamate + ADP + phosphate + H(+). It catalyses the reaction L-aspartyl-tRNA(Asn) + L-glutamine + ATP + H2O = L-asparaginyl-tRNA(Asn) + L-glutamate + ADP + phosphate + 2 H(+). Its function is as follows. Allows the formation of correctly charged Asn-tRNA(Asn) or Gln-tRNA(Gln) through the transamidation of misacylated Asp-tRNA(Asn) or Glu-tRNA(Gln) in organisms which lack either or both of asparaginyl-tRNA or glutaminyl-tRNA synthetases. The reaction takes place in the presence of glutamine and ATP through an activated phospho-Asp-tRNA(Asn) or phospho-Glu-tRNA(Gln). The protein is Aspartyl/glutamyl-tRNA(Asn/Gln) amidotransferase subunit B of Nitrosococcus oceani (strain ATCC 19707 / BCRC 17464 / JCM 30415 / NCIMB 11848 / C-107).